The following is a 191-amino-acid chain: MLISDRDIRAEIDSQRIVLEPFEPAMVQPSSVDVRIDKFFRLFDNHKYAHIDPAQEQPELTRLVEVEQDEAFILHPGEFVLGSTYETVTLPDDIAARLEGKSSLGRLGLLTHSTAGFIDPGFSGHVTLELSNMATLPIKLWPGMKIGQLCFFRLSSSAEFPYGQGEYGNRYQGQRGPTASRSHLNFHRTRI.

DCTP contacts are provided by residues 101-106 (KSSLGR), D119, 127-129 (TLE), Q148, Y162, and Q174. E129 functions as the Proton donor/acceptor in the catalytic mechanism. A disordered region spans residues 169-191 (NRYQGQRGPTASRSHLNFHRTRI). Residues 171-183 (YQGQRGPTASRSH) show a composition bias toward polar residues.

The protein belongs to the dCTP deaminase family. Homotrimer.

The catalysed reaction is dCTP + 2 H2O = dUMP + NH4(+) + diphosphate. Its pathway is pyrimidine metabolism; dUMP biosynthesis; dUMP from dCTP: step 1/1. In terms of biological role, bifunctional enzyme that catalyzes both the deamination of dCTP to dUTP and the hydrolysis of dUTP to dUMP without releasing the toxic dUTP intermediate. In Pseudarthrobacter chlorophenolicus (strain ATCC 700700 / DSM 12829 / CIP 107037 / JCM 12360 / KCTC 9906 / NCIMB 13794 / A6) (Arthrobacter chlorophenolicus), this protein is dCTP deaminase, dUMP-forming.